Consider the following 715-residue polypeptide: ATP-dependent zinc metalloprotease YME1L1 (715 aa).

Topologically, residues 1 to 237 are mitochondrial matrix; that stretch reads MFSLSSTVQP…TNDSLRRTRL (237 aa). The disordered stretch occupies residues 34–54; sequence NTPVSQKQHRDTVPEHEAPSS. Positions 41–52 are enriched in basic and acidic residues; the sequence is QHRDTVPEHEAP. A helical membrane pass occupies residues 238 to 258; the sequence is ILFVLLLFGIYGLLKNPFLSV. The Mitochondrial intermembrane portion of the chain corresponds to 259–715; it reads RFRTTTGLDS…VLEGKKLEVR (457 aa). ATP is bound by residues Val-283, Thr-325, Gly-326, Lys-327, Thr-328, and Leu-329. Zn(2+) is bound at residue His-541. Glu-542 is a catalytic residue. Residues His-545 and Asp-619 each coordinate Zn(2+).

In the N-terminal section; belongs to the AAA ATPase family. The protein in the C-terminal section; belongs to the peptidase M41 family. As to quaternary structure, homohexamer; may also form heterohexamers. Exists in several complexes of 600-1100 kDa. Interacts with AFG1L. Requires Zn(2+) as cofactor. Proteolytically processed by mitochondrial processing peptidase (MPP) to generate the mature form. Degraded in an OMA1-dependent manner in response to oxidative stress. As to expression, detected in heart and skeletal muscle (at protein level).

It localises to the mitochondrion inner membrane. It is found in the mitochondrion. It catalyses the reaction ATP + H2O = ADP + phosphate + H(+). Functionally, ATP-dependent metalloprotease that catalyzes the degradation of folded and unfolded proteins with a suitable degron sequence in the mitochondrial intermembrane region. Plays an important role in regulating mitochondrial morphology and function by cleaving OPA1 at position S2, giving rise to a form of OPA1 that promotes maintenance of normal mitochondrial structure and mitochondrial protein metabolism. Ensures cell proliferation, maintains normal cristae morphology and complex I respiration activity, promotes antiapoptotic activity and protects mitochondria from the accumulation of oxidatively damaged membrane proteins. Required to control the accumulation of nonassembled respiratory chain subunits (NDUFB6, OX4 and ND1). Involved in the mitochondrial adaptation in response to various signals, such as stress or developmental cues, by mediating degradation of mitochondrial proteins to rewire the mitochondrial proteome. Catalyzes degradation of mitochondrial proteins, such as translocases, lipid transfer proteins and metabolic enzymes in response to nutrient starvation in order to limit mitochondrial biogenesis: mechanistically, YME1L is activated by decreased phosphatidylethanolamine levels caused by LPIN1 activity in response to mTORC1 inhibition. Acts as a regulator of adult neural stem cell self-renewal by promoting mitochondrial proteome rewiring, preserving neural stem and progenitor cells self-renewal. Required for normal, constitutive degradation of PRELID1. Catalyzes the degradation of OMA1 in response to membrane depolarization. Mediates degradation of TIMM17A downstream of the integrated stress response (ISR). Catalyzes degradation of MICU1 when MICU1 is not assembled via an interchain disulfide. The polypeptide is ATP-dependent zinc metalloprotease YME1L1 (Yme1l1) (Mus musculus (Mouse)).